The chain runs to 243 residues: Nuclear protein UL4 homolog (243 aa).

Positions 193-226 (RPDDQTTPTPTPHQYTSQRRQPETNCPSPQPAFF) are disordered. Over residues 205–219 (HQYTSQRRQPETNCP) the composition is skewed to polar residues.

It belongs to the alphaherpesvirinae HHV-1 UL4 family.

Its subcellular location is the host nucleus. This Varicella-zoster virus (strain Oka vaccine) (HHV-3) protein is Nuclear protein UL4 homolog.